The sequence spans 515 residues: 1-pyrroline-5-carboxylate dehydrogenase 2 (515 aa).

Residues Glu-286 and Cys-320 contribute to the active site.

This sequence belongs to the aldehyde dehydrogenase family. RocA subfamily.

It catalyses the reaction L-glutamate 5-semialdehyde + NAD(+) + H2O = L-glutamate + NADH + 2 H(+). It participates in amino-acid degradation; L-proline degradation into L-glutamate; L-glutamate from L-proline: step 2/2. The protein is 1-pyrroline-5-carboxylate dehydrogenase 2 (rocA2) of Halalkalibacterium halodurans (strain ATCC BAA-125 / DSM 18197 / FERM 7344 / JCM 9153 / C-125) (Bacillus halodurans).